The sequence spans 120 residues: uncharacterized protein (120 aa).

The N-terminal stretch at 1–16 is a signal peptide; sequence MFKFILLCFCINFAFS.

This is an uncharacterized protein from Acheta domesticus (House cricket).